A 117-amino-acid polypeptide reads, in one-letter code: Large ribosomal subunit protein uL18 (117 aa).

It belongs to the universal ribosomal protein uL18 family. In terms of assembly, part of the 50S ribosomal subunit; part of the 5S rRNA/L5/L18/L25 subcomplex. Contacts the 5S and 23S rRNAs.

Its function is as follows. This is one of the proteins that bind and probably mediate the attachment of the 5S RNA into the large ribosomal subunit, where it forms part of the central protuberance. The protein is Large ribosomal subunit protein uL18 of Chromobacterium violaceum (strain ATCC 12472 / DSM 30191 / JCM 1249 / CCUG 213 / NBRC 12614 / NCIMB 9131 / NCTC 9757 / MK).